A 3987-amino-acid polypeptide reads, in one-letter code: Hybrid PKS-NRPS synthetase buaA (3987 aa).

One can recognise a Ketosynthase family 3 (KS3) domain in the interval 5 to 438 (NEPIAIVGSG…GANAHAIVES (434 aa)). Active-site for beta-ketoacyl synthase activity residues include Cys176, His315, and His358. Positions 546–872 (VFTGQGAQWP…RNADDVESFS (327 aa)) are malonyl-CoA:ACP transacylase (MAT) domain. The segment at 939 to 1072 (HELLGVRVDS…GAVRLQLGAA (134 aa)) is N-terminal hotdog fold. Positions 939 to 1240 (HELLGVRVDS…VAPLVPVTQS (302 aa)) constitute a PKS/mFAS DH domain. The segment at 940 to 1238 (ELLGVRVDSL…LQVAPLVPVT (299 aa)) is dehydratase (DH) domain. His970 (proton acceptor; for dehydratase activity) is an active-site residue. A C-terminal hotdog fold region spans residues 1087-1240 (MNDVNIEHFY…VAPLVPVTQS (154 aa)). The active-site Proton donor; for dehydratase activity is Asp1147. The interval 1399-1583 (YLANLVKQLS…TSTPSHDVFM (185 aa)) is methyltransferase (MT) domain. The interval 2113 to 2285 (TYLLVGLTGE…LPGSVMNLAG (173 aa)) is ketoreductase (KR) domain. The Carrier 1 domain maps to 2397-2473 (RVLTNGLILT…AMVEDTMERM (77 aa)). Position 2433 is an O-(pantetheine 4'-phosphoryl)serine (Ser2433). Residues 2489–2561 (AADRPSAPSD…PPPSSVMSED (73 aa)) form a disordered region. The segment covering 2514-2525 (HNSEEQESHAME) has biased composition (basic and acidic residues). Residues 2532-2550 (STTSGGECSSTKESSSSEA) are compositionally biased toward low complexity. The segment at 2582–3001 (MGYGSLQFFF…QLVKMCAYME (420 aa)) is condensation (C) domain. The segment at 3042–3448 (LDVAQARPEA…GQLYYEGRIA (407 aa)) is adenylation (A) (KR) domain. In terms of domain architecture, Carrier 2 spans 3564–3644 (ADLSETELAL…AMALKIRNSQ (81 aa)). Ser3604 carries the O-(pantetheine 4'-phosphoryl)serine modification. Residues 3680 to 3916 (TVVLTGATGY…TGIAAAAVGA (237 aa)) form a reductase (R) domain region.

This sequence in the C-terminal section; belongs to the NRP synthetase family.

It participates in mycotoxin biosynthesis. Functionally, hybrid PKS-NRPS synthetase; part of the gene cluster that mediates the biosynthesis of burnettramic acids, an unusual class of bolaamphiphilic pyrrolizidinediones that display potent antibacterial, antifungal, and cytotoxic activities. The first step of the biosynthesis of burnettramic acids is the hydroxylation of proline by the proline hydroxylase buaE to generate 4-hydroxyproline. The PKS-NRPS buaA and trans-enoyl reductase buaC construct the highly reduced polyketide chain, and the condensation (C) domain of buaA then catalyzes the amide bond formation with the activated 4-hydroxyproline. This is followed by the R domain releasing the nascent polyketide-peptide directly via a Dieckmann condensation to afford a tetramic acid fused to the hydroxyproline, generating the bicyclic pyrrolidinedione moiety. The cytochrome P450 monooxygenases buaD and buaG are likely responsible for the multiple hydroxylations on the polyketide chain and its terminus, although in a heterologous context, buaD does not appear to be required. Therefore, while buaG may be a multifunctional cytochrome P450 monooxygenase, it cannot be ruled out that the two secondary alcohols on the polyketide chain could have an acetate origin. Finally, the glycosyltransferase buaB transfers beta-D-mannose to the aglycone burnettramic acid A to form burnettramic acid A. Burnettramic acid B is a minor cis-pyrrolizidine epimer of burnettramic acid A and it is likely that small amounts of it form naturally in acidic environments. In Petromyces alliaceus (Aspergillus alliaceus), this protein is Hybrid PKS-NRPS synthetase buaA.